Consider the following 1746-residue polypeptide: Inactive tyrosine-protein kinase PEAK1 (1746 aa).

The tract at residues 44–66 is disordered; it reads KTNANHSNNHRIRNTGNFRPPVA. Ser-281 carries the post-translational modification Phosphoserine. Disordered regions lie at residues 334–411 and 489–517; these read QSMV…KVPE and LEGPVNSPKTKSSSSTPNSPVTSSSLTPG. Over residues 338 to 349 the composition is skewed to low complexity; the sequence is SSDSTSPDSSLT. A compositionally biased stretch (polar residues) spans 355-364; it reads ETASSLSQKI. Residues 492-513 are compositionally biased toward low complexity; it reads PVNSPKTKSSSSTPNSPVTSSS. Phosphoserine is present on residues Ser-540, Ser-572, and Ser-587. Residues 551-577 form a disordered region; the sequence is ITSGTGPNVPPRKNCHKSAPTSPTATN. 2 positions are modified to phosphotyrosine: Tyr-635 and Tyr-641. Ser-648 carries the phosphoserine modification. At Tyr-665 the chain carries Phosphotyrosine. Disordered stretches follow at residues 671 to 700, 713 to 764, 802 to 920, 1052 to 1102, and 1138 to 1158; these read ESKVPDNTTSKTTDCLQTKGFSNSTEHKRG, LNRG…EKAS, DADV…AADA, VTED…DPNP, and GKTDQEAPNASQPTPPPLPKK. The segment covering 675 to 694 has biased composition (polar residues); that stretch reads PDNTTSKTTDCLQTKGFSNS. A compositionally biased stretch (low complexity) spans 718-730; the sequence is SSPQRSYSSSHSS. Composition is skewed to polar residues over residues 748–758 and 820–841; these read TQESQMVGSSS and LFTSQPSGEAEAPQTTDSPTTK. Phosphoserine is present on residues Ser-826 and Ser-854. Residues 864-874 are compositionally biased toward pro residues; the sequence is SEPPAPFPPPR. Over residues 889-902 the composition is skewed to polar residues; it reads HFTNWTKPTSPTRS. Ser-898 carries the post-translational modification Phosphoserine. Composition is skewed to basic and acidic residues over residues 903 to 920, 1052 to 1062, and 1084 to 1094; these read TEAESVLHSEGSRRAADA, VTEDFSPRDPR, and ELEREDGKEDI. The residue at position 1151 (Thr-1151) is a Phosphothreonine. Position 1188 is a phosphotyrosine (Tyr-1188). The interval 1285–1311 is required for homodimerization; the sequence is EVVGKIRSLHTDALKKLAVKCEDLFMA. In terms of domain architecture, Protein kinase spans 1313–1675; that stretch reads QKDQLRFGVD…LLWGPREDLF (363 aa). A Phosphoserine modification is found at Ser-1374. The tract at residues 1402-1456 is disordered; sequence LLPWEDPDDPEKDEDDMEETEEDAKGETDGKNPKPCSEAASSQKENQGVMSKKQR. Acidic residues predominate over residues 1406 to 1423; the sequence is EDPDDPEKDEDDMEETEE. Over residues 1424 to 1433 the composition is skewed to basic and acidic residues; the sequence is DAKGETDGKN. Positions 1440–1450 are enriched in polar residues; the sequence is AASSQKENQGV. Positions 1670-1743 are required for homodimerization; sequence PREDLFQTFT…DSLSCIVKIL (74 aa).

Belongs to the protein kinase superfamily. Homodimer. Interacts with BCAR1 and CRK. Interacts with PRAG1. Interacts (when phosphorylated at Tyr-1188) with SHC1 (via PID domain). Found in a complex with PPP1CA, PPP1CC, SHC1 and PEAK1. Interacts (when phosphorylated at Tyr-635) with tensin TNS3 (when phosphorylated on the SH2 domain); TNS3 also interacts with integrins ITGB1, ITGB3 and ITGB5 and mediates their association with PEAK1. Interacts with RASAL2 and GRB2. In terms of processing, phosphorylated on tyrosine in a CSK-dependent manner in response to adhesion to fibronectin and to EGF stimulation. Phosphorylation at Tyr-665 by a Src family kinase controls subcellular localization to focal adhesion and focal adhesion dynamics. Phosphorylation at Tyr-1188 is essential for binding to SHC1. Phosphorylation at Tyr-635 promotes interaction with tensin TNS3.

The protein resides in the cytoplasm. It localises to the cytoskeleton. It is found in the cell junction. The protein localises to the focal adhesion. Functionally, probable catalytically inactive kinase. Scaffolding protein that regulates the cytoskeleton to control cell spreading and migration by modulating focal adhesion dynamics. Acts as a scaffold for mediating EGFR signaling. This is Inactive tyrosine-protein kinase PEAK1 (PEAK1) from Homo sapiens (Human).